The following is a 104-amino-acid chain: Growth-regulated protein homolog alpha (104 aa).

The signal sequence occupies residues 1–30; it reads MAPAATAAAPRLLRAAMLFLLLVAAGRRAA. Cystine bridges form between Cys-40–Cys-66 and Cys-42–Cys-82.

Belongs to the intercrine alpha (chemokine CxC) family.

The protein localises to the secreted. This chain is Growth-regulated protein homolog alpha, found in Bos taurus (Bovine).